The sequence spans 420 residues: Tyrosine--tRNA ligase (420 aa).

Tyr38 contributes to the L-tyrosine binding site. Residues 43–52 (PTGDSLHIGH) carry the 'HIGH' region motif. L-tyrosine-binding residues include Tyr169 and Gln173. A 'KMSKS' region motif is present at residues 231-235 (KFGKS). An ATP-binding site is contributed by Lys234. The 67-residue stretch at 353-419 (KNLVDFLVDT…GKRKYTLVTI (67 aa)) folds into the S4 RNA-binding domain.

Belongs to the class-I aminoacyl-tRNA synthetase family. TyrS type 1 subfamily. As to quaternary structure, homodimer.

It localises to the cytoplasm. The enzyme catalyses tRNA(Tyr) + L-tyrosine + ATP = L-tyrosyl-tRNA(Tyr) + AMP + diphosphate + H(+). In terms of biological role, catalyzes the attachment of tyrosine to tRNA(Tyr) in a two-step reaction: tyrosine is first activated by ATP to form Tyr-AMP and then transferred to the acceptor end of tRNA(Tyr). This chain is Tyrosine--tRNA ligase, found in Lactobacillus helveticus (strain DPC 4571).